We begin with the raw amino-acid sequence, 219 residues long: Elongation factor Ts, chloroplastic (219 aa).

This sequence belongs to the EF-Ts family.

It is found in the plastid. It localises to the chloroplast. In terms of biological role, associates with the EF-Tu.GDP complex and induces the exchange of GDP to GTP. It remains bound to the aminoacyl-tRNA.EF-Tu.GTP complex up to the GTP hydrolysis stage on the ribosome. The protein is Elongation factor Ts, chloroplastic (tsf) of Guillardia theta (Cryptophyte).